The chain runs to 508 residues: Photosystem II CP47 reaction center protein (508 aa).

A run of 6 helical transmembrane segments spans residues 21–36 (SVHI…WAGS), 101–115 (IVFS…IWHW), 140–156 (GIHL…FGAF), 203–218 (IAAG…FHLS), 237–252 (VLSS…AFVV), and 457–472 (TFAL…HGAR).

This sequence belongs to the PsbB/PsbC family. PsbB subfamily. As to quaternary structure, PSII is composed of 1 copy each of membrane proteins PsbA, PsbB, PsbC, PsbD, PsbE, PsbF, PsbH, PsbI, PsbJ, PsbK, PsbL, PsbM, PsbT, PsbX, PsbY, PsbZ, Psb30/Ycf12, at least 3 peripheral proteins of the oxygen-evolving complex and a large number of cofactors. It forms dimeric complexes. It depends on Binds multiple chlorophylls. PSII binds additional chlorophylls, carotenoids and specific lipids. as a cofactor.

It is found in the plastid. It localises to the chloroplast thylakoid membrane. One of the components of the core complex of photosystem II (PSII). It binds chlorophyll and helps catalyze the primary light-induced photochemical processes of PSII. PSII is a light-driven water:plastoquinone oxidoreductase, using light energy to abstract electrons from H(2)O, generating O(2) and a proton gradient subsequently used for ATP formation. This Calycanthus floridus var. glaucus (Eastern sweetshrub) protein is Photosystem II CP47 reaction center protein.